An 837-amino-acid polypeptide reads, in one-letter code: Translation initiation factor IF-2 (837 aa).

The disordered stretch occupies residues 94–253; the sequence is KRSPDEIEAE…QHGFQNPTGP (160 aa). A compositionally biased stretch (basic and acidic residues) spans 95–148; the sequence is RSPDEIEAERQRELEEQRAAEEAERLKAEEAAARQRAEEEARKAEEAARAKAAE. Low complexity predominate over residues 149–171; sequence EAVSAQPAAAVEVAAAEPVAKPA. Composition is skewed to basic and acidic residues over residues 172–188 and 220–229; these read AAEE…PKRD and STDEESDGYR. Over residues 230-244 the composition is skewed to basic residues; that stretch reads RGGRGGKSKLKKRNQ. Residues 337 to 506 enclose the tr-type G domain; sequence TRAPVVTVMG…LLQAEVLELK (170 aa). The tract at residues 346–353 is G1; it reads GHVDHGKT. 346–353 is a GTP binding site; that stretch reads GHVDHGKT. Residues 371–375 are G2; sequence GITQH. The G3 stretch occupies residues 392-395; it reads DTPG. Residues 392–396 and 446–449 contribute to the GTP site; these read DTPGH and NKID. The segment at 446–449 is G4; sequence NKID. Residues 482 to 484 form a G5 region; sequence SAK.

It belongs to the TRAFAC class translation factor GTPase superfamily. Classic translation factor GTPase family. IF-2 subfamily.

Its subcellular location is the cytoplasm. In terms of biological role, one of the essential components for the initiation of protein synthesis. Protects formylmethionyl-tRNA from spontaneous hydrolysis and promotes its binding to the 30S ribosomal subunits. Also involved in the hydrolysis of GTP during the formation of the 70S ribosomal complex. The protein is Translation initiation factor IF-2 of Pseudomonas paraeruginosa (strain DSM 24068 / PA7) (Pseudomonas aeruginosa (strain PA7)).